Reading from the N-terminus, the 704-residue chain is Elongation factor G (704 aa).

One can recognise a tr-type G domain in the interval 10–286; that stretch reads KKVRNIGIMA…AVIDFLPNPM (277 aa). Residues 19–26, 83–87, and 137–140 contribute to the GTP site; these read AHIDAGKT, DTPGH, and NKMD.

The protein belongs to the TRAFAC class translation factor GTPase superfamily. Classic translation factor GTPase family. EF-G/EF-2 subfamily.

Its subcellular location is the cytoplasm. Its function is as follows. Catalyzes the GTP-dependent ribosomal translocation step during translation elongation. During this step, the ribosome changes from the pre-translocational (PRE) to the post-translocational (POST) state as the newly formed A-site-bound peptidyl-tRNA and P-site-bound deacylated tRNA move to the P and E sites, respectively. Catalyzes the coordinated movement of the two tRNA molecules, the mRNA and conformational changes in the ribosome. The protein is Elongation factor G of Corynebacterium jeikeium (strain K411).